Consider the following 107-residue polypeptide: Heme-degrading monooxygenase (107 aa).

One can recognise an ABM domain in the interval 2-94; that stretch reads IIVTNTAKIT…YILDNKIAYY (93 aa). Residue Asn6 coordinates Fe cation. His76 serves as a coordination point for heme.

Belongs to the antibiotic biosynthesis monooxygenase family. Heme-degrading monooxygenase IsdG subfamily. Homodimer.

Its subcellular location is the cytoplasm. The enzyme catalyses heme b + 3 reduced [NADPH--hemoprotein reductase] + 3 O2 = biliverdin IXalpha + CO + Fe(2+) + 3 oxidized [NADPH--hemoprotein reductase] + 3 H2O + H(+). Its function is as follows. Allows bacterial pathogens to use the host heme as an iron source. Catalyzes the oxidative degradation of the heme macrocyclic porphyrin ring to the biliverdin in the presence of a suitable electron donor such as ascorbate or NADPH--cytochrome P450 reductase, with subsequent release of free iron. This chain is Heme-degrading monooxygenase, found in Bacillus cereus (strain ATCC 14579 / DSM 31 / CCUG 7414 / JCM 2152 / NBRC 15305 / NCIMB 9373 / NCTC 2599 / NRRL B-3711).